A 223-amino-acid chain; its full sequence is Imidazoleglycerol-phosphate dehydratase (223 aa).

The protein belongs to the imidazoleglycerol-phosphate dehydratase family.

It carries out the reaction D-erythro-1-(imidazol-4-yl)glycerol 3-phosphate = 3-(imidazol-4-yl)-2-oxopropyl phosphate + H2O. The protein operates within amino-acid biosynthesis; L-histidine biosynthesis; L-histidine from 5-phospho-alpha-D-ribose 1-diphosphate: step 6/9. The chain is Imidazoleglycerol-phosphate dehydratase (HIS3) from Torulaspora delbrueckii (Yeast).